The sequence spans 209 residues: Large ribosomal subunit protein uL4 (209 aa).

The disordered stretch occupies residues 50-78 (STLKKGEVSGGGKKPYQQKHTGRARQGSI).

This sequence belongs to the universal ribosomal protein uL4 family. In terms of assembly, part of the 50S ribosomal subunit.

Functionally, one of the primary rRNA binding proteins, this protein initially binds near the 5'-end of the 23S rRNA. It is important during the early stages of 50S assembly. It makes multiple contacts with different domains of the 23S rRNA in the assembled 50S subunit and ribosome. Its function is as follows. Forms part of the polypeptide exit tunnel. The sequence is that of Large ribosomal subunit protein uL4 from Mycoplasmoides gallisepticum (strain R(low / passage 15 / clone 2)) (Mycoplasma gallisepticum).